The primary structure comprises 82 residues: Putative antitoxin VapB23 (82 aa).

Putative antitoxin component of a possible type II toxin-antitoxin (TA) system. The cognate toxin is VapC23. The sequence is that of Putative antitoxin VapB23 (vapB23) from Mycobacterium tuberculosis (strain ATCC 25618 / H37Rv).